Here is a 168-residue protein sequence, read N- to C-terminus: Coiled-coil domain-containing protein 200 (168 aa).

Positions 16 to 50 (LDRRRWLMAQQQQELQQKEQELKNHQEEEQQSEEK) form a coiled coil. A disordered region spans residues 23–168 (MAQQQQELQQ…LKSTNYIQQW (146 aa)). Residues 31–52 (QQKEQELKNHQEEEQQSEEKLQ) show a composition bias toward basic and acidic residues. Positions 70-82 (SQEQPQPSQQQPS) are enriched in low complexity. Pro residues-rich tracts occupy residues 83–94 (VQPPSQPPPQPS) and 104–117 (GPQP…PQPT). Composition is skewed to polar residues over residues 124-138 (RCTQ…QDSQ) and 145-168 (PCQS…IQQW).

The polypeptide is Coiled-coil domain-containing protein 200 (Homo sapiens (Human)).